The sequence spans 457 residues: Multidrug resistance protein MdtK (457 aa).

The next 12 membrane-spanning stretches (helical) occupy residues 11–31 (LSALAVPVIIAQVSQTSMGVV), 53–73 (IWLPAILFGHGLLLALTPVVA), 93–113 (FLAAIISVLTMLVLYQGEYAI), 127–147 (AIGYLHALLWGVPGYLFYQVL), 159–179 (PGMMIGFIGLLINIPINYIFI), 190–210 (GVGCGVATASVYWIMMLLMML), 249–269 (LLFEVTLFAVVALLVLPLGVV), 276–296 (IALNFSSLMFVLPLSVGVATT), 313–333 (IAAHTGIMAGVALACCTAIFT), 357–377 (LMLLAAVYQISDAVQVIGTGV), 387–407 (IFYITFVAYWVLGLPSGYLLA), and 417–437 (GPAGFWCGFIIGLTAAAVMMV).

This sequence belongs to the multi antimicrobial extrusion (MATE) (TC 2.A.66.1) family. MdtK subfamily.

The protein resides in the cell inner membrane. Multidrug efflux pump that functions probably as a Na(+)/drug antiporter. The protein is Multidrug resistance protein MdtK of Pectobacterium atrosepticum (strain SCRI 1043 / ATCC BAA-672) (Erwinia carotovora subsp. atroseptica).